A 382-amino-acid chain; its full sequence is D-galactonate dehydratase (382 aa).

Asp183 contacts Mg(2+). His185 acts as the Proton donor in catalysis. The Mg(2+) site is built by Glu209 and Glu235. Residue His285 is the Proton acceptor of the active site.

It belongs to the mandelate racemase/muconate lactonizing enzyme family. GalD subfamily. Mg(2+) is required as a cofactor.

The catalysed reaction is D-galactonate = 2-dehydro-3-deoxy-D-galactonate + H2O. The protein operates within carbohydrate acid metabolism; D-galactonate degradation; D-glyceraldehyde 3-phosphate and pyruvate from D-galactonate: step 1/3. Catalyzes the dehydration of D-galactonate to 2-keto-3-deoxy-D-galactonate. This is D-galactonate dehydratase from Salmonella paratyphi A (strain AKU_12601).